A 509-amino-acid polypeptide reads, in one-letter code: Nucleolar GTP-binding protein 2 (509 aa).

Positions 1–14 (MGTGKKEATRRAKG) are enriched in basic and acidic residues. A disordered region spans residues 1 to 22 (MGTGKKEATRRAKGGETGNGFG). One can recognise a CP-type G domain in the interval 204 to 365 (WNELYKVIDS…LIDCPGIVPP (162 aa)). Residues 314 to 321 (GYPNTGKS) and 358 to 362 (DCPGI) contribute to the GTP site. Residues 480 to 509 (EMKKREIHEAPAATETAEETKEEEFKGFDD) form a disordered region.

The protein belongs to the TRAFAC class YlqF/YawG GTPase family. NOG2 subfamily.

The protein resides in the nucleus. It localises to the nucleolus. Functionally, GTPase that associates with pre-60S ribosomal subunits in the nucleolus and is required for their nuclear export and maturation. The polypeptide is Nucleolar GTP-binding protein 2 (NOG2) (Yarrowia lipolytica (strain CLIB 122 / E 150) (Yeast)).